The chain runs to 150 residues: Actin-depolymerizing factor 3 (150 aa).

Residues Gly7 to Ser150 enclose the ADF-H domain.

It belongs to the actin-binding proteins ADF family.

Functionally, actin-depolymerizing protein. Severs actin filaments (F-actin) and binds to actin monomers. The chain is Actin-depolymerizing factor 3 (ADF3) from Oryza sativa subsp. japonica (Rice).